Consider the following 414-residue polypeptide: Seminal vesicle secretory protein 2 (414 aa).

An N-terminal signal peptide occupies residues 1–22 (MKSSVFILSLFLLLERQAAVVG). Q23 carries the post-translational modification Pyrrolidone carboxylic acid. 13 repeat units span residues 108–120 (ESQI…VKSS), 127–139 (GSQL…VKSS), 140–152 (ESQL…VKAS), 153–165 (GSQL…VKAS), 166–178 (GSQL…MKSS), 179–191 (GSQV…MKSS), 192–204 (GSQV…MKAS), 205–217 (ESQI…RKSQ), 224–236 (YGQM…TKSL), 237–249 (ESQA…VKSQ), 257–269 (YGQR…ETQL), 275–287 (DAQL…QKSQ), and 299–311 (SAQL…QKSL). The segment at 108-311 (ESQIKSFRQV…LKSFGQQKSL (204 aa)) is 13 X 13 AA tandem repeats. 3 disordered regions span residues 170–228 (KSYG…GQMK), 240–294 (AKSF…SFSQ), and 306–369 (GQQK…FGQE). The segment covering 240-259 (AKSFGQVKSQSGQMKSSYGQ) has biased composition (polar residues). Residues 277–294 (QLKSYGQQKSQKQSSFSQ) show a composition bias toward low complexity. Composition is skewed to polar residues over residues 306–321 (GQQK…TQQK) and 342–351 (SVQQKSTQQM). The segment covering 358 to 369 (SQFGQQRQFGQE) has biased composition (low complexity).

Post-translationally, the repeating unit appears to be involved in the formation of the copulatory plug via a transglutaminase reaction cross-linking glutamine and lysine residues.

Functionally, the rat seminal vesicle contains six major androgen-dependent secretory proteins referred to as SVS I-VI. The SVS I-III proteins appear to be components of the rat copulatory plug, with the SVS II protein being the major component. The polypeptide is Seminal vesicle secretory protein 2 (Svs2) (Rattus norvegicus (Rat)).